The primary structure comprises 339 residues: Ribosomal RNA small subunit methyltransferase H (339 aa).

Residues 56 to 58 (GGH), Asp76, Phe102, Asp123, and Gln130 contribute to the S-adenosyl-L-methionine site. Disordered stretches follow at residues 274-309 (RHSRGQYPEDENLPMPPQRPRYFSKPKRIAPSKAEV) and 320-339 (LRVATRTDTPYNTDPSPQHS). Residues 325–339 (RTDTPYNTDPSPQHS) are compositionally biased toward polar residues.

It belongs to the methyltransferase superfamily. RsmH family.

It is found in the cytoplasm. The catalysed reaction is cytidine(1402) in 16S rRNA + S-adenosyl-L-methionine = N(4)-methylcytidine(1402) in 16S rRNA + S-adenosyl-L-homocysteine + H(+). Its function is as follows. Specifically methylates the N4 position of cytidine in position 1402 (C1402) of 16S rRNA. The polypeptide is Ribosomal RNA small subunit methyltransferase H (Psychrobacter sp. (strain PRwf-1)).